A 154-amino-acid chain; its full sequence is Sec-independent protein translocase protein TatB (154 aa).

The helical transmembrane segment at 1–21 (MIDIGITKLAIIGGIALIVIG) threads the bilayer.

Belongs to the TatB family. The Tat system comprises two distinct complexes: a TatABC complex, containing multiple copies of TatA, TatB and TatC subunits, and a separate TatA complex, containing only TatA subunits. Substrates initially bind to the TatABC complex, which probably triggers association of the separate TatA complex to form the active translocon.

The protein localises to the cell inner membrane. Its function is as follows. Part of the twin-arginine translocation (Tat) system that transports large folded proteins containing a characteristic twin-arginine motif in their signal peptide across membranes. Together with TatC, TatB is part of a receptor directly interacting with Tat signal peptides. TatB may form an oligomeric binding site that transiently accommodates folded Tat precursor proteins before their translocation. The protein is Sec-independent protein translocase protein TatB of Albidiferax ferrireducens (strain ATCC BAA-621 / DSM 15236 / T118) (Rhodoferax ferrireducens).